We begin with the raw amino-acid sequence, 291 residues long: 4-hydroxy-tetrahydrodipicolinate synthase (291 aa).

Residue Thr-45 coordinates pyruvate. The Proton donor/acceptor role is filled by Tyr-133. Lys-161 acts as the Schiff-base intermediate with substrate in catalysis. Ile-203 contributes to the pyruvate binding site.

Belongs to the DapA family. Homotetramer; dimer of dimers.

The protein resides in the cytoplasm. It carries out the reaction L-aspartate 4-semialdehyde + pyruvate = (2S,4S)-4-hydroxy-2,3,4,5-tetrahydrodipicolinate + H2O + H(+). It participates in amino-acid biosynthesis; L-lysine biosynthesis via DAP pathway; (S)-tetrahydrodipicolinate from L-aspartate: step 3/4. Its function is as follows. Catalyzes the condensation of (S)-aspartate-beta-semialdehyde [(S)-ASA] and pyruvate to 4-hydroxy-tetrahydrodipicolinate (HTPA). This Acidithiobacillus ferrooxidans (strain ATCC 23270 / DSM 14882 / CIP 104768 / NCIMB 8455) (Ferrobacillus ferrooxidans (strain ATCC 23270)) protein is 4-hydroxy-tetrahydrodipicolinate synthase.